The following is a 134-amino-acid chain: Complexin-1 (134 aa).

Residues 1 to 112 form a disordered region; it reads MEFVMKQALG…PGCGDAAEEE (112 aa). Basic and acidic residues predominate over residues 15 to 81; that stretch reads DMGKMLGGDE…IKKKEEREAE (67 aa). Positions 29–69 form a coiled coil; that stretch reads DAAKKEEERQEALRQEEEERKAKYAKMEAEREAVRQGIRDK. Residues 48-70 form an interaction with the SNARE complex region; sequence RKAKYAKMEAEREAVRQGIRDKY.

It belongs to the complexin/synaphin family. In terms of assembly, binds to the SNARE core complex containing SNAP25, VAMP2 and STX1A.

It is found in the cytoplasm. The protein resides in the cytosol. Its subcellular location is the perikaryon. The protein localises to the presynapse. In terms of biological role, positively regulates a late step in synaptic vesicle exocytosis. Organizes the SNAREs into a cross-linked zigzag topology that, when interposed between the vesicle and plasma membranes, is incompatible with fusion, thereby preventing SNAREs from releasing neurotransmitters until an action potential arrives at the synapse. Also involved in glucose-induced secretion of insulin by pancreatic beta-cells. This Bos taurus (Bovine) protein is Complexin-1 (CPLX1).